Here is a 2542-residue protein sequence, read N- to C-terminus: Zinc finger FYVE domain-containing protein 26 (2542 aa).

2 disordered regions span residues 591–658 and 740–811; these read HLPE…GPHT and VTSN…QVEA. Phosphoserine is present on residues S612 and S616. Over residues 752-772 the composition is skewed to basic residues; sequence RRYRPTAKRHSSLRRGRRTRR. Positions 785–803 are enriched in low complexity; sequence SLEGTSSELSTSTSEGSLS. Residue S798 is modified to Phosphoserine. A coiled-coil region spans residues 866 to 891; it reads MFVERYQEVIQELARVEHKIENQNSD. The segment at 1273–1292 is disordered; sequence SPRPSENPSAERKSDSSPKD. A compositionally biased stretch (basic and acidic residues) spans 1281-1290; that stretch reads SAERKSDSSP. Positions 1495-1522 form a coiled coil; that stretch reads VSDMAVPEELKSELQRKLTELRVYQKIL. Phosphoserine occurs at positions 1739, 1761, 1783, and 1785. Positions 1746–1807 are disordered; it reads PVHQASDPET…LEFVPPETPP (62 aa). Low complexity predominate over residues 1757–1779; sequence SRSSSAEFSAAAAAPAPAAPGSA. An FYVE-type zinc finger spans residues 1815–1875; the sequence is DETESMCMVC…VCDQCYSYYN (61 aa). Zn(2+) contacts are provided by C1821, C1824, C1838, C1841, C1846, C1849, C1867, and C1870.

The protein belongs to the ZFYVE26 family. Interacts with AP5Z1, AP5B1, AP5S1 and SPG11. Interacts with TTC19 and KIF13A.

The protein resides in the cytoplasm. Its subcellular location is the cytoskeleton. It localises to the microtubule organizing center. The protein localises to the centrosome. It is found in the midbody. Functionally, phosphatidylinositol 3-phosphate-binding protein required for the abscission step in cytokinesis: recruited to the midbody during cytokinesis and acts as a regulator of abscission. May also be required for efficient homologous recombination DNA double-strand break repair. This Rattus norvegicus (Rat) protein is Zinc finger FYVE domain-containing protein 26 (Zfyve26).